The sequence spans 396 residues: Anticodon nuclease (396 aa).

Functionally, anticodon endonuclease (ACNase) that triggers the cleavage ligation of tRNA(Lys). It is activated by T4 stp protein and masked by the prrD protein (the endonuclease subunit of EcoprrI). The prr locus restricts phage T4 mutants lacking polynucleotide kinase or RNA ligase; T4 mutants lacking these genes manifest a T4-induced anticodon nuclease (ACNase). It is thought that Stp and other T4-encoded ACNase factors counteract the masking agents, thus activating the latent ACNase. In Escherichia coli, this protein is Anticodon nuclease.